We begin with the raw amino-acid sequence, 249 residues long: L-fucose operon activator (249 aa).

Residues 1 to 56 (MNYRDELILQWVNQQGKASVIELAQHCDISVETIRRDLNKLANKGLLHRTHGGAVS) enclose the HTH deoR-type domain. A DNA-binding region (H-T-H motif) is located at residues 18 to 37 (ASVIELAQHCDISVETIRRD).

Transcriptional activator of the fuc operon. The protein is L-fucose operon activator (fucR) of Haemophilus influenzae (strain ATCC 51907 / DSM 11121 / KW20 / Rd).